The sequence spans 667 residues: UvrABC system protein B (667 aa).

The Helicase ATP-binding domain occupies 25–180 (DSLQNQHRFQ…LLRALVSVQY (156 aa)). 38 to 45 (GATGTGKT) serves as a coordination point for ATP. Residues 91–114 (YYDYYQPEAYIPVSDTYIEKSSSI) carry the Beta-hairpin motif. The Helicase C-terminal domain maps to 429–595 (QVDDLLGEIK…PIVKRSSNSI (167 aa)). Residues 626–661 (PELIQQLEAQMKEAAKNLEFESAAKYRDRIKQLRDK) enclose the UVR domain.

Belongs to the UvrB family. Forms a heterotetramer with UvrA during the search for lesions. Interacts with UvrC in an incision complex.

The protein resides in the cytoplasm. In terms of biological role, the UvrABC repair system catalyzes the recognition and processing of DNA lesions. A damage recognition complex composed of 2 UvrA and 2 UvrB subunits scans DNA for abnormalities. Upon binding of the UvrA(2)B(2) complex to a putative damaged site, the DNA wraps around one UvrB monomer. DNA wrap is dependent on ATP binding by UvrB and probably causes local melting of the DNA helix, facilitating insertion of UvrB beta-hairpin between the DNA strands. Then UvrB probes one DNA strand for the presence of a lesion. If a lesion is found the UvrA subunits dissociate and the UvrB-DNA preincision complex is formed. This complex is subsequently bound by UvrC and the second UvrB is released. If no lesion is found, the DNA wraps around the other UvrB subunit that will check the other stand for damage. In Microcystis aeruginosa (strain NIES-843 / IAM M-2473), this protein is UvrABC system protein B.